The sequence spans 159 residues: Transcription elongation factor GreA (159 aa).

Positions Met7–Asn72 form a coiled coil.

It belongs to the GreA/GreB family.

Functionally, necessary for efficient RNA polymerase transcription elongation past template-encoded arresting sites. The arresting sites in DNA have the property of trapping a certain fraction of elongating RNA polymerases that pass through, resulting in locked ternary complexes. Cleavage of the nascent transcript by cleavage factors such as GreA or GreB allows the resumption of elongation from the new 3'terminus. GreA releases sequences of 2 to 3 nucleotides. The polypeptide is Transcription elongation factor GreA (Buchnera aphidicola subsp. Schizaphis graminum (strain Sg)).